The following is a 391-amino-acid chain: Pepsin B (391 aa).

Residues 1–16 (MKCLILALICLQLSEG) form the signal peptide. Positions 17–60 (LVVRQILHKGKSIRERMEENGVLEDFLRYNKKADPAAKFLFNKD) are cleaved as a propeptide — activation peptide. A Peptidase A1 domain is found at 75 to 388 (YFGEISIGTP…DMANNRVGFA (314 aa)). Residue aspartate 93 is part of the active site. 2 disulfide bridges follow: cysteine 106-cysteine 111 and cysteine 270-cysteine 274. Aspartate 279 is a catalytic residue. Cysteine 313 and cysteine 346 form a disulfide bridge.

Belongs to the peptidase A1 family.

It localises to the secreted. The catalysed reaction is Degradation of gelatin, little activity on hemoglobin. Specificity on B chain of insulin more restricted than that of pepsin A. Does not cleave 1-Phe-|-Val-2, 4-Gln-|-His-5 or 23-Gly-|-Phe-24.. Functionally, hydrolyzes various peptides including beta-endorphin, insulin B chain, dynorphin A, and neurokinin A, with high specificity for the cleavage of the Phe-Xaa bonds. In Monodelphis domestica (Gray short-tailed opossum), this protein is Pepsin B.